The following is a 77-amino-acid chain: uncharacterized protein (77 aa).

This is an uncharacterized protein from Salmonella typhimurium (strain LT2 / SGSC1412 / ATCC 700720).